The primary structure comprises 2048 residues: MLRVIVESATNIPKTKFGKPDPIVSVIFKDEKKKTKKVDNELNPVWNEILEFDLRGIPLDSSSSLVIVVKDFETIGQNKLIGTATVSLKDLIGDQNRSLPYKQTSLLNEKGQDTGATIDLVIGYTPPSAPHPNDPSGTSVPGMGEEEEEDQGDEDRVDGIVRGPGPKGPSGTVSEAQLARRITKGKSSRRMLSNKPQDFQIRVRVIEGRQLCGNNIRPVVKVHICGQTHRTRIKRGNNPFFDELFFYNVHITPSELMDEIISIRVYNSHSLRADCLMGEFKIDVGFVYDEPGHAVMRKWLLLNDPEDTSSGAKGYMKVSMFVLGTGDEPPPEKRDRDNDSDDVESNLLLPAGIALRWVTFMLKIYRAEDIPQMDDAFSQTVKEIFGGNADKKNLVDPFVEVSFAGKKVCTNIIERNANPEWNQVVNLQIKFPSMCEKIKLTVYDWDRLTKNDVVGTTYLYLSKIAASGGEVEATTGETEVGFVPTFGPCYLNLYGSPREYTGFPDPYDELNSGKGEGVAYRGRIFVELNTFLEKKPPEKKLEPISSDDLLVVEKYQRRRKYSLSAVFHSATMLQDVGEAIQFEVSIGNYGNKFDATCKPLASTTQYSRAVFDGNYYYYLPWAHTKPVVTLTSYWEDISHRLDAVNTLLVMAERLQSNIEAVKSGIQGKIPANQLAEVWLKLIDEVIEDTRYTLPVTEGKANVTVLDTQIRKLRSRFLSQIHEAALRMRSEATDVKSTLLEIEEWLDKLMQLTEEPQNSMPDIIIWMIRGEKRLAYARIPAHQVLYSTSGGNASGKYCGKTQTILLKYPQEKTNGPKVPVELRVNIWLGLSAVEKKFNSFAEGTFTVFAEMYENQALVFGKWGTSGLVGRHKFSDVTGKIKLKREFFLPPKGWEWEGDWVVDPERSLLTEADAGHTEFTDEVYQNENRYPGGEWKQAEDTYTDANGDKAASPSEMTCPPGWEWEDDAWIYDINRAVDEKGWEYGITIPPDNKPKSWVAAEKMYHTHRRRRLVRKRKKDLTQTASSTARAMEELEDREGWEYASLIGWKFHWKQRSSDTFRRRRWRRKMAPSETHGAAAIFKLEGALGADTTEDGEEKGPEKQKHSATTVFGANTPIVSCNFDRVYIYHLRCYIYQARNLMALDKDSFSDPYAHVSFLHRSKTTEIIHSTLNPTWDQTIIFDEVEIFGEPQTVLQNPPNVTIELFDNDQVGKDEFLGRSICSPLVKLNSETDITPKLLWHPVMNGDKACGDVLVTAELILRNKDGSNLPILPSQRAPNLYMVPQGIRPVVQLTAIEILAWGLRNMKNYQMASVTSPSLVVECGGERVESVVIKSLKKTPNFPSSVLFMKVFLPKEELYMPPLVIKVIDHRQFGRKPVVGQCTIDHLDRFRCDPYAGKEDIVPQLKASLMSAPPCREVVIEIEDTKPLLASKLSEKEEEIVDWWSKFYASSGEHEKCGQYIQKGYSKLKIYDCELEDVADFEGLTDFSDTFKLYRGKSDENEDPSVVGEFKGSFRIYPLPDDPSVPAPPRQFRELPDSVPQECTVRIYIVQGLQLQPQDNNGLCDPYIKITLGKKVIEDRDHYIPNTLNPVFGRMYELSCYLPQEKDLKISVYDYDTFTRDEKVGETTIDLENRFLSRFGSHCGIPEQYCVSGVNTWRDQLRPTQLLQNVARFKGFPPPVLSEDGSRIRYGGRDYHLDEFEANKILHQHLGAPEERLALHILRTQGLVPEHVETRTLHSTFQPNISQGKLQMWVDVFPKSLGPPGPPFNITPRKAKKYYLRVIIWNTKDVILDEKSITGEDMSDIYVKGWISGSEENKQKTDVHYRSLDGEGNFNWRFVFPFDYLPAEQLCIVAKKEHFWSIDQTEFRVPPRLIIQIWDNDKFSLDDYLGFLELDLHRTIIPAKTSEKCSLDMIPDLKAMDPLKAKTASLFEQRSMKGWWPCYADKDGTRVMAGKVEMTLEVLNEREADERPAGKGRSEPNMNPKLDPPNRPETSFLWFTNPCKTMRFIVWRRFKWVIIGLLLLLILLLFVAVLLYSLPNYLSMKIVRPNA.

Residues 1–101 (MLRVIVESAT…IGDQNRSLPY (101 aa)) enclose the C2 1 domain. Over 1–2012 (MLRVIVESAT…MRFIVWRRFK (2012 aa)) the chain is Cytoplasmic. The interval 124 to 176 (YTPPSAPHPNDPSGTSVPGMGEEEEEDQGDEDRVDGIVRGPGPKGPSGTVSEA) is disordered. A compositionally biased stretch (acidic residues) spans 144–156 (GEEEEEDQGDEDR). A phosphoserine mark is found at Ser-170 and Ser-174. C2 domains follow at residues 183–300 (TKGK…RKWL) and 339–475 (DSDD…EATT). Positions 186-281 (KSSRRMLSNK…RADCLMGEFK (96 aa)) are necessary for interaction with EHD2. Asp-390, Asp-396, Asp-444, Asp-446, and Asp-452 together coordinate Ca(2+). N6-acetyllysine is present on residues Lys-540 and Lys-871. 2 consecutive C2 domains span residues 1110–1238 (GANT…LLWH) and 1269–1397 (LPSQ…GKED). Positions 1142, 1148, 1204, and 1206 each coordinate Ca(2+). Lys-1494 carries the post-translational modification N6-acetyllysine. C2 domains lie at 1523–1641 (PAPP…SHCG) and 1759–1907 (GPPG…EKCS). 7 residues coordinate Ca(2+): Asp-1556, Asp-1562, Asp-1611, Asp-1613, Asp-1878, Ser-1881, and Asp-1884. Over residues 1964–1975 (EADERPAGKGRS) the composition is skewed to basic and acidic residues. The disordered stretch occupies residues 1964–1986 (EADERPAGKGRSEPNMNPKLDPP). The chain crosses the membrane as a helical span at residues 2013–2033 (WVIIGLLLLLILLLFVAVLLY). Over 2034 to 2048 (SLPNYLSMKIVRPNA) the chain is Extracellular.

It belongs to the ferlin family. Interacts with EHD1. Interacts with EHD2; the interaction is direct. Interacts with DNM2 and KDR. Interacts with RIPOR2. The cofactor is Ca(2+). Expressed in myoblasts (at protein level). Expressed in endothelial cells.

It is found in the cell membrane. The protein localises to the nucleus membrane. Its subcellular location is the cytoplasmic vesicle membrane. In terms of biological role, calcium/phospholipid-binding protein that plays a role in the plasmalemma repair mechanism of endothelial cells that permits rapid resealing of membranes disrupted by mechanical stress. Involved in endocytic recycling. Implicated in VEGF signal transduction by regulating the levels of the receptor KDR. The protein is Myoferlin (Myof) of Mus musculus (Mouse).